Here is a 419-residue protein sequence, read N- to C-terminus: Protein translocase subunit SecY (419 aa).

10 helical membrane passes run 19–39 (IMILIFARLGNYIPIPGITEV), 64–84 (VISILTLGLGPFFSASLAVQF), 113–133 (ILTVLFCIIESFFLSNSLRSF), 143–163 (FVVAAAVTTGSLVLVWLSEVI), 167–189 (GIGNGSSLLILIGNLSRFRFLIN), 202–222 (SNLYIIYIIITLVSMLIFSTL), 255–275 (FGQAGVVPIIFSSSILLFLTT), 299–319 (IFYFFTFLVLIIFFSFFYTLI), 359–379 (FVGSILLSALILIPSILAAAL), and 380–400 (GVHPLSISGITSLILSFSIIN).

Belongs to the SecY/SEC61-alpha family. Component of the plastid Sec protein translocase complex, which is composed of at least SecY and SecE.

It localises to the plastid. It is found in the chloroplast thylakoid membrane. Its function is as follows. The central subunit of the protein translocation channel SecYE. Consists of two halves formed by TMs 1-5 and 6-10. These two domains form a lateral gate at the front which open onto the bilayer between TMs 2 and 7, and are clamped together by SecE at the back. The channel is closed by both a pore ring composed of hydrophobic SecY resides and a short helix (helix 2A) on the extracellular side of the membrane which forms a plug. The protein is Protein translocase subunit SecY of Diacronema lutheri (Unicellular marine alga).